Here is an 84-residue protein sequence, read N- to C-terminus: Putative defensin-like protein 63 (84 aa).

The signal sequence occupies residues 1–21; the sequence is MDIRKTYVIIFFVGILTISFS. 4 cysteine pairs are disulfide-bonded: Cys-40–Cys-81, Cys-44–Cys-67, Cys-53–Cys-79, and Cys-57–Cys-80.

The protein belongs to the DEFL family.

The protein localises to the secreted. This chain is Putative defensin-like protein 63, found in Arabidopsis thaliana (Mouse-ear cress).